We begin with the raw amino-acid sequence, 500 residues long: MWRPSDSTVYVPPPNPVSKVVATDAYVTRTNIFYHASSSRLLAVGHPYFSIKRANKTVVPKVSGYQYRVFKVVLPDPNKFALPDSSLFDPTTQRLVWACTGLEVGRGQPLGVGVSGHPFLNKYDDVENSGSGGNPGQDNRVNVGMDYKQTQLCMVGCAPPLGEHWGKGKQCTNTPVQAGDCPPLELITSVIQDGDMVDTGFGAMNFADLQTNKSDVPIDICGTTCKYPDYLQMAADPYGDRLFFFLRKEQMFARHFFNRAGEVGEPVPDTLIIKGSGNRTSVGSSIYVNTPSGSLVSSEAQLFNKPYWLQKAQGHNNGICWGNQLFVTVVDTTRSTNMTLCASVTTSSTYTNSDYKEYMRHVEEYDLQFIFQLCSITLSAEVMAYIHTMNPSVLEDWNFGLSPPPNGTLEDTYRYVQSQAITCQKPTPEKEKPDPYKNLSFWEVNLKEKFSSELDQYPLGRKFLLQSGYRGRSSIRTGVKRPAVSKASAAPKRKRAKTKR.

The tract at residues Ile475–Arg500 is disordered. Over residues Lys480–Ala490 the composition is skewed to low complexity. A compositionally biased stretch (basic residues) spans Pro491–Arg500.

The protein belongs to the papillomaviridae L1 protein family. As to quaternary structure, self-assembles into homopentamers. The capsid has an icosahedral symmetry and consists of 72 capsomers, with each capsomer being a pentamer of L1. Interacts with the minor capsid protein L2; this interaction is necessary for viral genome encapsidation. Interacts with protein E2; this interaction enhances E2-dependent replication and transcription activation.

It is found in the virion. It localises to the host nucleus. Forms an icosahedral capsid with a T=7 symmetry and a 50 nm diameter. The capsid is composed of 72 pentamers linked to each other by disulfide bonds and associated with L2 proteins. Binds to heparan sulfate proteoglycans on cell surface of basal layer keratinocytes to provide initial virion attachment. This binding mediates a conformational change in the virus capsid that facilitates efficient infection. The virion enters the host cell via endocytosis. During virus trafficking, L1 protein dissociates from the viral DNA and the genomic DNA is released to the host nucleus. The virion assembly takes place within the cell nucleus. Encapsulates the genomic DNA together with protein L2. This Human papillomavirus type 6a protein is Major capsid protein L1.